A 176-amino-acid polypeptide reads, in one-letter code: uncharacterized protein (176 aa).

An N-terminal signal peptide occupies residues 1 to 20 (MIKKISIILITLFIIQLTKS). The segment at 26–46 (NNNNNNNNNNNNNNNNNNNNN) is disordered. N-linked (GlcNAc...) asparagine glycosylation is present at N120.

This sequence belongs to the Dictyostelium gerABC family.

It localises to the secreted. This is an uncharacterized protein from Dictyostelium discoideum (Social amoeba).